A 177-amino-acid chain; its full sequence is Large ribosomal subunit protein uL6 (177 aa).

It belongs to the universal ribosomal protein uL6 family. Part of the 50S ribosomal subunit.

In terms of biological role, this protein binds to the 23S rRNA, and is important in its secondary structure. It is located near the subunit interface in the base of the L7/L12 stalk, and near the tRNA binding site of the peptidyltransferase center. In Dinoroseobacter shibae (strain DSM 16493 / NCIMB 14021 / DFL 12), this protein is Large ribosomal subunit protein uL6.